Reading from the N-terminus, the 196-residue chain is Flagellin B2 (196 aa).

Residues 1-12 (MFEFITDEDERG) constitute a propeptide that is removed on maturation.

The protein belongs to the archaeal flagellin family. Glycosylated.

It is found in the archaeal flagellum. Flagellin is the subunit protein which polymerizes to form the filaments of archaeal flagella. The protein is Flagellin B2 (flaB2) of Halobacterium salinarum (strain ATCC 700922 / JCM 11081 / NRC-1) (Halobacterium halobium).